A 262-amino-acid polypeptide reads, in one-letter code: Thioredoxin-like protein HCF164, chloroplastic (262 aa).

Residues 1 to 54 (MAVVASRCTGLLLPDLGASLAGFRRRRSTPASSLSFRPRRARRRLGSLSCIAPP) constitute a chloroplast transit peptide. The interval 47–90 (SLSCIAPPDSAEPQTDEPAAKDDSTEDKAEASSASQDAGNPTFP) is disordered. Residues 64 to 76 (PAAKDDSTEDKAE) show a composition bias toward basic and acidic residues. Over residues 78–89 (SSASQDAGNPTF) the composition is skewed to polar residues. The Thioredoxin domain occupies 78-230 (SSASQDAGNP…FLDNVVALAS (153 aa)). Catalysis depends on nucleophile residues cysteine 151 and cysteine 154. Residues cysteine 151 and cysteine 154 are joined by a disulfide bond.

This sequence belongs to the thioredoxin family.

It is found in the plastid. It localises to the chloroplast. In terms of biological role, probable thiol-disulfide oxidoreductase that may participate in various redox reactions in the chloroplast. This is Thioredoxin-like protein HCF164, chloroplastic from Oryza sativa subsp. japonica (Rice).